We begin with the raw amino-acid sequence, 142 residues long: Protein KNATM (142 aa).

The stretch at 4–36 forms a coiled coil; the sequence is KKDENSILENMKQEINHSLKEEAQEEEEILKKR.

As to quaternary structure, interacts with KNAT1, KNAT3, KNAT4, BEL1, BLH2, BLH4 and BLH9, but not with BLH8 or the KNATM-A and KNATM-C isoforms. Isoforms KNATM-A and KNATM-C: no interactions with KNATM-B, KNOXX or BELL proteins. Detected in inflorescences, seedlings, leaves, hydathodes, stems, roots, embryo and siliques. Expressed in a polar pattern in organ primordia and at the boundary of mature organs. Detected in the lateral domains of flower meristems, but not in the inflorescence meristem or the vegetative shoot apical meristem.

It localises to the cytoplasm. The protein resides in the nucleus. Its function is as follows. Transcriptional regulator involved in leaf proximal/distal patterning. May act by sequestering BELL transcription factors. This chain is Protein KNATM, found in Arabidopsis thaliana (Mouse-ear cress).